Consider the following 827-residue polypeptide: Periplasmic nitrate reductase (827 aa).

A signal peptide (tat-type signal) is located at residues 1-32 (MTLSRRAFIKQTAAATAASAAGVVLPGVDALA). Residues 37–93 (LTWSKAPCRFCGTGCGVSVGVKNGKVVATQGDPQAEVNRGLNCVKGYFLSKIMYGQD) form the 4Fe-4S Mo/W bis-MGD-type domain. 4 residues coordinate [4Fe-4S] cluster: cysteine 44, cysteine 47, cysteine 51, and cysteine 79. Mo-bis(molybdopterin guanine dinucleotide)-binding positions include lysine 81, glutamine 148, asparagine 173, cysteine 177, 241 to 245 (STFEH), 260 to 262 (QSD), methionine 371, glutamine 375, asparagine 481, 507 to 508 (SD), lysine 530, aspartate 557, and 717 to 726 (TGRVLEHWHS). Tryptophan 793 contacts substrate. Residues asparagine 801 and lysine 818 each coordinate Mo-bis(molybdopterin guanine dinucleotide).

It belongs to the prokaryotic molybdopterin-containing oxidoreductase family. NasA/NapA/NarB subfamily. Component of the periplasmic nitrate reductase NapAB complex composed of NapA and NapB. The cofactor is [4Fe-4S] cluster. Mo-bis(molybdopterin guanine dinucleotide) serves as cofactor. In terms of processing, predicted to be exported by the Tat system. The position of the signal peptide cleavage has not been experimentally proven.

The protein resides in the periplasm. It carries out the reaction 2 Fe(II)-[cytochrome] + nitrate + 2 H(+) = 2 Fe(III)-[cytochrome] + nitrite + H2O. Catalytic subunit of the periplasmic nitrate reductase complex NapAB. Receives electrons from NapB and catalyzes the reduction of nitrate to nitrite. This chain is Periplasmic nitrate reductase, found in Paraburkholderia xenovorans (strain LB400).